The following is a 1197-amino-acid chain: Sensor protein EvgS (1197 aa).

Residues 1 to 21 form the signal peptide; it reads MKFLPYIFLLCCGLWSTISFA. Residues 22–325 are Cytoplasmic-facing; the sequence is DEDYIEYRGI…SMTDENGSVR (304 aa). The chain crosses the membrane as a helical span at residues 326 to 346; the sequence is GVMGDILNIITLQTGLNFSPI. Residues 347 to 537 lie on the Periplasmic side of the membrane; sequence TVSHNIHAGT…TWDLYSEQFY (191 aa). Residues 538 to 558 traverse the membrane as a helical segment; sequence IVTTLSVLLVGSSLLWGFYLL. At 559-1197 the chain is on the cytoplasmic side; the sequence is RSVRRRKVIQ…EIAVFCQKND (639 aa). The region spanning 718-938 is the Histidine kinase domain; it reads TMSHEIRTPI…TFTITIPVEI (221 aa). H721 bears the Phosphohistidine; by autocatalysis mark. Positions 960 to 1074 constitute a Response regulatory domain; the sequence is SILIADDHPT…VLKTHLSQLH (115 aa). D1009 is modified (4-aspartylphosphate). The HPt domain occupies 1098 to 1197; that stretch reads DLQLMQEILM…EIAVFCQKND (100 aa). At H1137 the chain carries Phosphohistidine.

Post-translationally, activation requires a sequential transfer of a phosphate group from a His in the primary transmitter domain, to an Asp in the receiver domain and to a His in the secondary transmitter domain.

The protein localises to the cell inner membrane. The enzyme catalyses ATP + protein L-histidine = ADP + protein N-phospho-L-histidine.. In terms of biological role, member of the two-component regulatory system EvgS/EvgA. Phosphorylates EvgA via a four-step phosphorelay in response to environmental signals. This chain is Sensor protein EvgS (evgS), found in Escherichia coli (strain K12).